Consider the following 744-residue polypeptide: Photosystem I P700 chlorophyll a apoprotein A2 (744 aa).

Helical transmembrane passes span 48–71 (LFATHFGHLAIIFLWASGNVFHIA), 137–160 (LYAGAIGLLLLAAVFLFAGWLHLQ), 177–201 (LNHHLAGLFGVSSLAWTGHLVHVAI), 275–293 (MAHHHLAIAVIFIVAGHMY), 337–360 (LHFQLALALACLGVVTSLVAQHMY), 376–402 (AALYTHHQYIAGFLMVGAFAHGAIFLV), 424–446 (AIISHLSWVSLFLGFHTLGLYVH), and 527–545 (FLVHHAIALGLHTTTLILV). [4Fe-4S] cluster-binding residues include Cys-569 and Cys-578. 2 helical membrane passes run 585-606 (AFYLAMFWMLNTIGWVTFYWHW) and 653-675 (LAVWAWMFLFGHLVWATGFMFLI). The chlorophyll a site is built by His-664, Met-672, and Tyr-680. Trp-681 provides a ligand contact to phylloquinone. A helical transmembrane segment spans residues 717–737 (LVGLAHFTVGYVLTYAAFVIA).

This sequence belongs to the PsaA/PsaB family. The PsaA/B heterodimer binds the P700 chlorophyll special pair and subsequent electron acceptors. PSI consists of a core antenna complex that captures photons, and an electron transfer chain that converts photonic excitation into a charge separation. The cyanobacterial PSI reaction center is composed of one copy each of PsaA,B,C,D,E,F,I,J,K,L,M and X, and forms trimeric complexes. PSI electron transfer chain: 5 chlorophyll a, 1 chlorophyll a', 2 phylloquinones and 3 4Fe-4S clusters. PSI core antenna: 90 chlorophyll a, 22 carotenoids, 3 phospholipids and 1 galactolipid. P700 is a chlorophyll a/chlorophyll a' dimer, A0 is one or more chlorophyll a, A1 is one or both phylloquinones and FX is a shared 4Fe-4S iron-sulfur center. is required as a cofactor.

Its subcellular location is the cellular thylakoid membrane. It carries out the reaction reduced [plastocyanin] + hnu + oxidized [2Fe-2S]-[ferredoxin] = oxidized [plastocyanin] + reduced [2Fe-2S]-[ferredoxin]. PsaA and PsaB bind P700, the primary electron donor of photosystem I (PSI), as well as the electron acceptors A0, A1 and FX. PSI is a plastocyanin/cytochrome c6-ferredoxin oxidoreductase, converting photonic excitation into a charge separation, which transfers an electron from the donor P700 chlorophyll pair to the spectroscopically characterized acceptors A0, A1, FX, FA and FB in turn. Oxidized P700 is reduced on the lumenal side of the thylakoid membrane by plastocyanin or cytochrome c6. The protein is Photosystem I P700 chlorophyll a apoprotein A2 of Synechococcus sp. (strain JA-2-3B'a(2-13)) (Cyanobacteria bacterium Yellowstone B-Prime).